Reading from the N-terminus, the 144-residue chain is Protein E6 (144 aa).

Zinc fingers lie at residues 32–68 (CAFC…CALC) and 105–141 (CWLC…CLHC).

The protein belongs to the papillomaviridae E6 protein family. Forms homodimers. Interacts with ubiquitin-protein ligase UBE3A/E6-AP; this interaction stimulates UBE3A ubiquitin activity. Interacts with host TP53 and EP300; this interaction inhibits TP53 activity.

It localises to the host cytoplasm. The protein resides in the host nucleus. Plays a major role in the induction and maintenance of cellular transformation. E6 associates with host UBE3A/E6-AP ubiquitin-protein ligase and modulates its activity. Sequesters tumor suppressor TP53 in the host cytoplasm and modulates its activity by interacting with host EP300 that results in the reduction of TP53 acetylation and activation. In turn, apoptosis induced by DNA damage is inhibited. E6 also protects host keratinocytes from apoptosis by mediating the degradation of host BAK1. May also inhibit host immune response. The sequence is that of Protein E6 from Homo sapiens (Human).